The following is a 266-amino-acid chain: 3-methyl-2-oxobutanoate hydroxymethyltransferase (266 aa).

Positions 45 and 84 each coordinate Mg(2+). Residues 45–46 (DS), D84, and K112 contribute to the 3-methyl-2-oxobutanoate site. E114 is a binding site for Mg(2+). E181 serves as the catalytic Proton acceptor.

This sequence belongs to the PanB family. In terms of assembly, homodecamer; pentamer of dimers. Mg(2+) is required as a cofactor.

Its subcellular location is the cytoplasm. It carries out the reaction 3-methyl-2-oxobutanoate + (6R)-5,10-methylene-5,6,7,8-tetrahydrofolate + H2O = 2-dehydropantoate + (6S)-5,6,7,8-tetrahydrofolate. Its pathway is cofactor biosynthesis; (R)-pantothenate biosynthesis; (R)-pantoate from 3-methyl-2-oxobutanoate: step 1/2. Functionally, catalyzes the reversible reaction in which hydroxymethyl group from 5,10-methylenetetrahydrofolate is transferred onto alpha-ketoisovalerate to form ketopantoate. This Stutzerimonas stutzeri (strain A1501) (Pseudomonas stutzeri) protein is 3-methyl-2-oxobutanoate hydroxymethyltransferase.